The primary structure comprises 307 residues: Protoheme IX farnesyltransferase (307 aa).

Helical transmembrane passes span 29–49 (VISLLLWTTLTAMFMAARGWP), 51–71 (LGLLVVVSLAGYMSAGSAGVF), 101–120 (AAIFGGALQVLSFGMLWVWA), 124–143 (AAWMSLAGFLTYVVVYTLWL), 151–171 (IVLGGAAGCFPPLVGWAAVTG), 179–199 (FLFAIIFFWTPVHFWALALMI), 218–238 (RLTVAQIGLYAIYTVVLSVMP), 239–259 (VFLGEVGWLYFLSALVLGWLL), and 280–300 (VAVPLYLYSMLYLALLFVAGA).

It belongs to the UbiA prenyltransferase family. Protoheme IX farnesyltransferase subfamily.

The protein resides in the cell membrane. The enzyme catalyses heme b + (2E,6E)-farnesyl diphosphate + H2O = Fe(II)-heme o + diphosphate. The protein operates within porphyrin-containing compound metabolism; heme O biosynthesis; heme O from protoheme: step 1/1. Functionally, converts heme B (protoheme IX) to heme O by substitution of the vinyl group on carbon 2 of heme B porphyrin ring with a hydroxyethyl farnesyl side group. The chain is Protoheme IX farnesyltransferase from Deinococcus geothermalis (strain DSM 11300 / CIP 105573 / AG-3a).